The chain runs to 1048 residues: Platelet-derived growth factor receptor beta (1048 aa).

The signal sequence occupies residues 1 to 30; sequence MLRASAMRAAVLHLTVALAALLSSCTTVSC. The Extracellular segment spans residues 31 to 528; sequence LKIVPEEKQL…LVSSSLFSQV (498 aa). The 90-residue stretch at 35 to 124 folds into the Ig-like C2-type 1 domain; that stretch reads PEEKQLILAE…EIKEVAVFVP (90 aa). Disulfide bonds link Cys-52–Cys-108 and Cys-153–Cys-194. Residues Asn-87, Asn-159, Asn-224, and Asn-239 are each glycosylated (N-linked (GlcNAc...) asparagine). Ig-like C2-type domains are found at residues 216 to 309 and 319 to 406; these read PEDI…ASVN and AVKS…KEVT. Residues Cys-240 and Cys-293 are joined by a disulfide bond. N-linked (GlcNAc...) asparagine glycosylation is found at Asn-309, Asn-327, and Asn-457. An intrachain disulfide couples Cys-434 to Cys-503. A helical membrane pass occupies residues 529-549; the sequence is VLLAVVLTLVPIIIMSIIILI. Topologically, residues 550–1048 are cytoplasmic; it reads AVWKKKPRYE…PIPDPKPEKS (499 aa). Phosphotyrosine; by autocatalysis is present on residues Tyr-558, Tyr-575, and Tyr-577. In terms of domain architecture, Protein kinase spans 596–957; it reads LVLGRTLGSG…FLVHCVGDML (362 aa). Residues 602–610 and Lys-630 each bind ATP; that span reads LGSGAFGRV. Residues Tyr-735, Tyr-746, Tyr-758, Tyr-766, and Tyr-770 each carry the phosphotyrosine; by autocatalysis modification. Asp-821 acts as the Proton acceptor in catalysis. Phosphotyrosine; by autocatalysis occurs at positions 852 and 1036.

It belongs to the protein kinase superfamily. Tyr protein kinase family. CSF-1/PDGF receptor subfamily. In terms of assembly, interacts with homodimeric PDGFB and PDGFD, and with heterodimers formed by PDGFA and PDGFB. Monomer in the absence of bound ligand. Interaction with homodimeric PDGFB, heterodimers formed by PDGFA and PDGFB or homodimeric PDGFD, leads to receptor dimerization, where both PDGFRA homodimers and heterodimers with PDGFRB are observed. In terms of processing, ubiquitinated. After autophosphorylation, the receptor is polyubiquitinated, leading to its degradation. Post-translationally, autophosphorylated on tyrosine residues upon ligand binding. Autophosphorylation occurs in trans, i.e. one subunit of the dimeric receptor phosphorylates tyrosine residues on the other subunit.

It localises to the cell membrane. The protein localises to the cytoplasmic vesicle. Its subcellular location is the lysosome lumen. The enzyme catalyses L-tyrosyl-[protein] + ATP = O-phospho-L-tyrosyl-[protein] + ADP + H(+). With respect to regulation, present in an inactive conformation in the absence of bound ligand. Binding of PDGFB and/or PDGFD leads to dimerization and activation by autophosphorylation on tyrosine residues. Its function is as follows. Tyrosine-protein kinase that acts as a cell-surface receptor for homodimeric PDGFB and PDGFD and for heterodimers formed by PDGFA and PDGFB, and plays an essential role in the regulation of embryonic development, cell proliferation, survival, differentiation, chemotaxis and migration. Plays an essential role in blood vessel development by promoting proliferation, migration and recruitment of pericytes and smooth muscle cells to endothelial cells. Required for normal development of the cardiovascular system. Required for normal recruitment of pericytes (mesangial cells) in the kidney glomerulus, and for normal formation of a branched network of capillaries in kidney glomeruli. Promotes rearrangement of the actin cytoskeleton and the formation of membrane ruffles. Binding of its cognate ligands - homodimeric PDGFB, heterodimers formed by PDGFA and PDGFB or homodimeric PDGFD -leads to the activation of several signaling cascades; the response depends on the nature of the bound ligand and is modulated by the formation of heterodimers between PDGFRA and PDGFRB. Receptor signaling is down-regulated by protein phosphatases that dephosphorylate the receptor and its down-stream effectors, and by rapid internalization of the activated receptor. This chain is Platelet-derived growth factor receptor beta (pdgfrb), found in Takifugu rubripes (Japanese pufferfish).